Consider the following 205-residue polypeptide: Non-structural protein NS3 (205 aa).

Residues 177 to 205 (GTRSPETGCRKVTSGLPHGASGGSGTRQG) are disordered. A compositionally biased stretch (gly residues) spans 196–205 (ASGGSGTRQG).

The protein belongs to the orbivirus NS3 family.

Functionally, may play a role in the release of virions from infected cells. In Broadhaven virus (BRD), this protein is Non-structural protein NS3 (Segment-10).